A 191-amino-acid polypeptide reads, in one-letter code: Cdc42 homolog (191 aa).

10–17 (GDGAVGKT) serves as a coordination point for GTP. The short motif at 32–40 (YVPTVFDNY) is the Effector region element. Residues 57 to 61 (DTAGQ) and 115 to 118 (TQID) each bind GTP. C188 carries the cysteine methyl ester modification. Residue C188 is the site of S-geranylgeranyl cysteine attachment. The propeptide at 189–191 (KFL) is removed in mature form.

It belongs to the small GTPase superfamily. Rho family. CDC42 subfamily.

It localises to the cell junction. The protein resides in the adherens junction. Its subcellular location is the cell membrane. Functionally, regulates mbt kinase activity and is also required to recruit mbt to adherens junctions. Together with mbt, regulates photoreceptor cell morphogenesis. This chain is Cdc42 homolog, found in Aedes aegypti (Yellowfever mosquito).